The sequence spans 1128 residues: Phytochrome A (1128 aa).

Low complexity predominate over residues 1 to 21 (MSSSRPTQCSSSSSRTRQSSR). A disordered region spans residues 1–24 (MSSSRPTQCSSSSSRTRQSSRARI). Positions 219–404 (SMEVLCNTVV…VFAVHVNKEF (186 aa)) constitute a GAF domain. C324 contributes to the phytochromobilin binding site. 2 consecutive PAS domains span residues 620–690 (VTSE…LQGK) and 750–834 (VEGD…LAGD). The Histidine kinase domain maps to 904–1124 (YMRHAINNPL…TFILSVELAS (221 aa)).

The protein belongs to the phytochrome family. Homodimer. Contains one covalently linked phytochromobilin chromophore.

In terms of biological role, regulatory photoreceptor which exists in two forms that are reversibly interconvertible by light: the Pr form that absorbs maximally in the red region of the spectrum and the Pfr form that absorbs maximally in the far-red region. Photoconversion of Pr to Pfr induces an array of morphogenic responses, whereas reconversion of Pfr to Pr cancels the induction of those responses. Pfr controls the expression of a number of nuclear genes including those encoding the small subunit of ribulose-bisphosphate carboxylase, chlorophyll A/B binding protein, protochlorophyllide reductase, rRNA, etc. It also controls the expression of its own gene(s) in a negative feedback fashion. The sequence is that of Phytochrome A (PHYA) from Oryza sativa subsp. indica (Rice).